Here is a 304-residue protein sequence, read N- to C-terminus: Tissue factor pathway inhibitor (304 aa).

The first 28 residues, 1 to 28 (MIYTMKKVHALWASVCLLLNLAPAPLNA), serve as a signal peptide directing secretion. An O-linked (GalNAc...) threonine; partial glycan is attached at threonine 42. BPTI/Kunitz inhibitor domains are found at residues 54–104 (CAFK…KKMC) and 125–175 (CFLE…KNIC). Cystine bridges form between cysteine 54–cysteine 104, cysteine 63–cysteine 87, cysteine 79–cysteine 100, cysteine 125–cysteine 175, cysteine 134–cysteine 158, and cysteine 150–cysteine 171. A glycan (N-linked (GlcNAc...) asparagine) is linked at asparagine 145. N-linked (GlcNAc...) asparagine glycosylation occurs at asparagine 195. Serine 202 carries an O-linked (GalNAc...) serine; partial glycan. Threonine 203 carries O-linked (GalNAc...) threonine glycosylation. In terms of domain architecture, BPTI/Kunitz inhibitor 3 spans 217–267 (CLTPADRGLCRANENRFYYNSVIGKCRPFKYSGCGGNENNFTSKQECLRAC). Intrachain disulfides connect cysteine 217–cysteine 267, cysteine 226–cysteine 250, and cysteine 242–cysteine 263.

O-glycosylated. Mostly in endothelial cells.

It localises to the secreted. The protein localises to the microsome membrane. In terms of biological role, inhibits factor X (X(a)) directly and, in a Xa-dependent way, inhibits VIIa/tissue factor activity, presumably by forming a quaternary Xa/LACI/VIIa/TF complex. It possesses an antithrombotic action and also the ability to associate with lipoproteins in plasma. This Homo sapiens (Human) protein is Tissue factor pathway inhibitor (TFPI).